The primary structure comprises 257 residues: Imidazole glycerol phosphate synthase subunit HisF (257 aa).

Active-site residues include Asp11 and Asp130.

This sequence belongs to the HisA/HisF family. Heterodimer of HisH and HisF.

It localises to the cytoplasm. It carries out the reaction 5-[(5-phospho-1-deoxy-D-ribulos-1-ylimino)methylamino]-1-(5-phospho-beta-D-ribosyl)imidazole-4-carboxamide + L-glutamine = D-erythro-1-(imidazol-4-yl)glycerol 3-phosphate + 5-amino-1-(5-phospho-beta-D-ribosyl)imidazole-4-carboxamide + L-glutamate + H(+). The protein operates within amino-acid biosynthesis; L-histidine biosynthesis; L-histidine from 5-phospho-alpha-D-ribose 1-diphosphate: step 5/9. Functionally, IGPS catalyzes the conversion of PRFAR and glutamine to IGP, AICAR and glutamate. The HisF subunit catalyzes the cyclization activity that produces IGP and AICAR from PRFAR using the ammonia provided by the HisH subunit. The chain is Imidazole glycerol phosphate synthase subunit HisF from Francisella philomiragia subsp. philomiragia (strain ATCC 25017 / CCUG 19701 / FSC 153 / O#319-036).